A 961-amino-acid polypeptide reads, in one-letter code: Mitogen-activated protein kinase kinase kinase 13-B (961 aa).

A disordered region spans residues 89-115 (RDQDEPENTAPQGSSHSGDGGNNSANE). The segment covering 101-114 (GSSHSGDGGNNSAN) has biased composition (low complexity). The 242-residue stretch at 171–412 (ISELQWLGSG…FRQILMHLDI (242 aa)) folds into the Protein kinase domain. ATP contacts are provided by residues 177–185 (LGSGAQGAV) and Lys198. Asp282 serves as the catalytic Proton acceptor. Leucine-zipper stretches follow at residues 436–457 (VKKH…DEEL) and 489–510 (LSSI…EQTV). The stretch at 460–497 (RRREELRHALDIREHYERKLERANNLYMELSSIMLQLE) forms a coiled coil. 3 disordered regions span residues 507–644 (EQTV…ETSQ), 796–874 (TPPA…DVAC), and 933–961 (NAES…SSTW). The span at 563-580 (AEGSAASASPISGSPKTS) shows a compositional bias: low complexity. Residues 586 to 598 (GRYRSKPRHRRGN) are compositionally biased toward basic residues. Residues 613–628 (QESPAPSQQSSQHQTP) show a composition bias toward low complexity. The segment covering 813–826 (DSSEGEEGEVDSEV) has biased composition (acidic residues). An acidic region spans residues 814 to 827 (SSEGEEGEVDSEVE). Residues 839–854 (STCQSYSTFSSENFSV) show a composition bias toward polar residues. Positions 934 to 945 (AESDCDSSEGEC) are enriched in acidic residues. Residues 949 to 961 (TVRTNNPVNSSTW) show a composition bias toward polar residues.

The protein belongs to the protein kinase superfamily. Ser/Thr protein kinase family.

The protein resides in the cytoplasm. It is found in the membrane. The catalysed reaction is L-seryl-[protein] + ATP = O-phospho-L-seryl-[protein] + ADP + H(+). The enzyme catalyses L-threonyl-[protein] + ATP = O-phospho-L-threonyl-[protein] + ADP + H(+). Its function is as follows. May have a role in the JNK signaling pathway. This Xenopus laevis (African clawed frog) protein is Mitogen-activated protein kinase kinase kinase 13-B (map3k13-b).